The following is a 694-amino-acid chain: MTTPDAEDASPSPEYRSDQDDDMAAEQTTDRQSGDASPTQKPANGKPNAKDPLRPRRKKARRACFACQRAHLTCGDERPCGRCIKRGLQDHCMDGVRKKAKYLHDAPDGSLMPGVGGHYPYMNGNRPTPLPAQDTHTVSVSPQSNMYNQAQPPAAFYPPNSIPGQLPVTQDTRAFSNQQSPISPPFTQAHHASVQNAGAPSTMSQGQQGMQQFGPLFDPSDPALFNFDISSLNFGNHYGALEFGMLGHMSSGAVETPHDNNLMNNMSGSVNMYNQQVPSGYPDQNNAAAMAFGPNGLPGSEWQETQSRQGSMHVHTPNNTSGSGSHDHHPHRNDSLNGPHAFAIGQGPATHSTASPASTDASTYEGDNPLSTAAFFANANRPHAQRSPLVSRPQQENRPPTTALQSIHANGIRKRQRDTKSVYQGITKPYDYVKGYHRLYQLIDKKYSRPWVAKAQQYLQNYRPVLLQVREELNRDDLIHQEMGLQRHLMTLQEHFAEVGTPFLICRRSGEIVGINKEFTILTGWKRDVLLGHEPNLNVNLGTNRESSESDTSTQNTTPNLSAQDSEGATPSVNIIELMDARSALEFLQHFSELCYQDPRGYASQRVNMLRYQTKADVDRIHNMKNASSGDAKLDPLVKMEGGAVHQGESAMQRLGAKSGMVDCMIWWHIKRDIFDMPVLVCMSVMPVLDKGLP.

Residues 1-57 (MTTPDAEDASPSPEYRSDQDDDMAAEQTTDRQSGDASPTQKPANGKPNAKDPLRPRR) form a disordered region. The segment at residues 64–92 (CFACQRAHLTCGDERPCGRCIKRGLQDHC) is a DNA-binding region (zn(2)-C6 fungal-type). 4 disordered regions span residues 175–216 (FSNQ…FGPL), 289–369 (AMAF…GDNP), 384–420 (AQRSPLVSRPQQENRPPTTALQSIHANGIRKRQRDTK), and 539–569 (VNLGTNRESSESDTSTQNTTPNLSAQDSEGA). Over residues 193 to 204 (SVQNAGAPSTMS) the composition is skewed to polar residues. A compositionally biased stretch (low complexity) spans 205–214 (QGQQGMQQFG). The span at 302–324 (WQETQSRQGSMHVHTPNNTSGSG) shows a compositional bias: polar residues. Over residues 349 to 363 (ATHSTASPASTDAST) the composition is skewed to low complexity. Residues 392 to 408 (RPQQENRPPTTALQSIH) show a composition bias toward polar residues. The PAS domain occupies 485–559 (LQRHLMTLQE…SDTSTQNTTP (75 aa)).

It belongs to the ERT1/acuK family.

Its subcellular location is the nucleus. In terms of biological role, transcription factor which regulates nonfermentable carbon utilization. Activator of gluconeogenetic genes. The chain is Transcription activator of gluconeogenesis PTRG_06536 from Pyrenophora tritici-repentis (strain Pt-1C-BFP) (Wheat tan spot fungus).